The chain runs to 84 residues: Small ribosomal subunit protein uS17c (84 aa).

This sequence belongs to the universal ribosomal protein uS17 family. As to quaternary structure, part of the 30S ribosomal subunit.

Its subcellular location is the plastid. It is found in the chloroplast. Functionally, one of the primary rRNA binding proteins, it binds specifically to the 5'-end of 16S ribosomal RNA. This chain is Small ribosomal subunit protein uS17c (rps17), found in Phaeodactylum tricornutum (strain CCAP 1055/1).